The primary structure comprises 157 residues: Transcription elongation factor GreA (157 aa).

A coiled-coil region spans residues 47–75 (ENAEYDAAREKQGQIEDRITELENILSNA).

Belongs to the GreA/GreB family.

Its function is as follows. Necessary for efficient RNA polymerase transcription elongation past template-encoded arresting sites. The arresting sites in DNA have the property of trapping a certain fraction of elongating RNA polymerases that pass through, resulting in locked ternary complexes. Cleavage of the nascent transcript by cleavage factors such as GreA or GreB allows the resumption of elongation from the new 3'terminus. GreA releases sequences of 2 to 3 nucleotides. The sequence is that of Transcription elongation factor GreA from Mycoplasmopsis pulmonis (strain UAB CTIP) (Mycoplasma pulmonis).